The sequence spans 492 residues: Catalase-1 (492 aa).

Active-site residues include H65 and N138. Heme is bound at residue Y348.

It belongs to the catalase family. In terms of assembly, homotetramer and heterotetramer. At least six or seven isozymes are produced from a mixture of 3 gene products. Interacts with NCA1. Interacts with LSD1. Requires heme as cofactor.

It is found in the cytoplasm. The catalysed reaction is 2 H2O2 = O2 + 2 H2O. In terms of biological role, occurs in almost all aerobically respiring organisms and serves to protect cells from the toxic effects of hydrogen peroxide. The sequence is that of Catalase-1 (CAT1) from Arabidopsis thaliana (Mouse-ear cress).